A 79-amino-acid chain; its full sequence is Sec-independent protein translocase protein TatA (79 aa).

A helical membrane pass occupies residues 1–21; sequence MGGFTSIWHWVIVLLVIVLLF. Residues 54-79 form a disordered region; the sequence is ELKTLDAQATQTKVHETSEIKSKQES. The segment covering 66–79 has biased composition (basic and acidic residues); that stretch reads KVHETSEIKSKQES.

Belongs to the TatA/E family. As to quaternary structure, the Tat system comprises two distinct complexes: a TatABC complex, containing multiple copies of TatA, TatB and TatC subunits, and a separate TatA complex, containing only TatA subunits. Substrates initially bind to the TatABC complex, which probably triggers association of the separate TatA complex to form the active translocon.

Its subcellular location is the cell inner membrane. In terms of biological role, part of the twin-arginine translocation (Tat) system that transports large folded proteins containing a characteristic twin-arginine motif in their signal peptide across membranes. TatA could form the protein-conducting channel of the Tat system. The protein is Sec-independent protein translocase protein TatA of Helicobacter pylori (strain J99 / ATCC 700824) (Campylobacter pylori J99).